Consider the following 4749-residue polypeptide: MMMCAATASPAAASSGPGGDGFFAAATISSSPAPGALFMPVPDGSVAAAGLGLGLPTTDSRGHYQLLLSGRALADRYRRIYTTALSDRDQAGSSTGHPASRNKKILNKKKLKRKQKSKSKVKTRSKSENVENTVIIPDIKLHSNPSAFNIYCNVRHCVLEWQKKETSLAAASKNSVQSGESDSDEEEESREPPIKLPKIIEVGLCEVFELIKETRFSHPSLCLRSLQALLNVLQGQQPEGLQSEPPEVLESLFQLLLEITVRSTGMNDSTGQSLTALSCACLFSLVASWGETGRTLQAISAILTNNGSHACQTIQVPTILNSLQRSVQAVLVGKIQVQDWFSNGIKKAALMHKWPLKEVSVDEDDQCLLQNDGFFLYLLCKDGLYKIGSGYSGTVRGHIYNSTSRIRNRKEKKSWLGYAQGYLLYRDLNNHSMTAIRISPETLEQDGTVLLPDCHTEGQNILFTDGEYINQIAASRDDGFVVRIFATSTEPVLQQELQLKLARKCLHACGISLFDLEKDLHIISTGFDEESAILGAGREFALMKTANGKIYYTGKYQSLGIKQGGPSAGKWVELPITKSPKIVHFSVGHDGSHALLVAEDGSVFFTGSASKGEDGESTKSRRQSKPYKPKKIIKMEGKIVVYTACNNGSSSVISKDGELYMFGKDAIYSDSSSLVSDLKGHFVTQVAMGKAHTCVLMKNGEVWTFGVNNKGQCGRDTGAMNQGGKGFGVENMATAMDEDLEEELDEKDEKSMMCPPGMHKWKLEQCMVCTVCGDCTGYGASCVSSGRPDRVPGGICGCGSGESGCAVCGCCKACARELDGQEARQRGILDAVKEMIPLDLLLAVPVPGVNIEEHLQLRQEEKRQRVIRRHRLEDGRGPLVFAGPIFMNHREQALARLRSHPAQLKHKRDKHKDGSGDRGEKDASKITTYPPGSVRFDCELRAVQVSCGFHHSVVLMENGDVYTFGYGQHGQLGHGDVNSRGCPTLVQALPGPSTQVTAGSNHTAVLLMDGQVFTFGSFSKGQLGRPILDIPYWNAKPAPMPNIGSKYGRKATWIGASGDQTFLRIDEALINSHVLATSEIFASKHIIGLVPASISEPPPFKCLLINKVDGSCKTFNDSEQEDLQGFGVCLDPVYDVLWRFRPSTRELWCYNAVVADARLPSATDMQSRCSILSPELALPTGSRALTTRSHAALHILGCLDTLAAMQDLKMGIASTEEETQAVMKVYSKEDYSVVNRFESHGGGWGYSAHSVEAIRFSADTDILLGGLGLFGGRGEYTAKIKLFELGPDGGDHETDGDLLAETDVLAYDCAAREKYAMMFDEPVLLQAGWWYVAWARVSGPSSDCGSHGQASITTDDGVIFQFKSSKKSNNGTDVNAGQIPQLLYRLPTSDGSTSKGKQQTSEPVHILKRSFARTVSVECFESLLSILHWSWTTLVLGVEELRGLKGFQFTATLLDLERLRFVGTCCLRLLRVYTCEIYPVSATGKAVVEETSKLAECIGKTRTLLRKILSEGVDHCMVKLDNDPQGYLSQPLRLLEAVLQECHNTFTACFHSFYPTPALQWACLCDLLNCLDQEANFKTSSSRLLAAVMSALCHTSVKLTSLFPIAYDGEVLLRSIVKQVSTENDSTLVHRFPLLVGHMEKLSQSEENISGMTSFREVLEKMLVIVVLPVRNSLRRESELFSSHLVSNTCGLLASIVSELTASALGSEVDGLNSLHSVKASANRFTKTSQGRSWNTGNGSPDAICFAVDKPGIVVVGFAVYGGGGIHEYELEVLVDDSEHAGDSTHSHRWTSLELVKGTYTTDDSPSDIAEIRLDKVVPLKENVKYAVRLRNYGSRTANGDGGMTTVQCPDGVTFTFSTCSLSSNGTNQTRGQIPQILYYRSEFDGDLQSQLLSKANEEDKNCSRALSVVSTVVRAAKDLLHRALAVDADDIPELLSSSSLFSMLLPLIIAYIGPVAAAIPKVAVEVFGLVQQLLPSVAILNQKYAPPAFNPNQSTDSTTGNQPEQGLSACTTSNHYAVIESEHPYKPACVMHYKVTFPECVRWMTIEFDPQCGTAQSEDVIRLLIPVRTIQNSGYGAKLTSVHENLNSWVELKKYSGSSGWPTMVLVLPGNEALFSLETASDYVKDDKASFYGFKCFAIGYEFSPGPDEGVIQLEKELANLGGVCAAALMKKDLALPVGNELEEDLEILEEAALQVCKTHSGILGKGLALSHSPTILEALEGNLPLQIQSNEQSFLDDFIACVPGSSGGRLARWLQPDSYADPQKTSLILNKDDIRCGWPTTITVQTKDQYGDVVHVPNMKVEVKAVPVSQKKTSLQQDQGKKCQRIPGSPSAAASSADMTFGGLASPKLDVSYEPMIVKEARYIAITMMKVYENYSFEELRFASPTPKRPSENMLIRVNNDGTYCANWTPGAIGLYTVHVTIDGIEIDAGLEVKVKDPPKGMIPPGTQLVKPKADPQPNKIRKFVAKDSAGLRIRSHPSLQSEQIGIVRVNGTITFIDEIHNDDGVWLRLNEETIKKYVPNMNGYTEAWCLSFNQHLGKSLLVPVDNIFNASQGVRDLDVFSWTSKAFFPQEPKTNTDDFFKDMNSCGPQEATMQERDHPFLRGGPGMYKVVKTGPSGHNIRSCPNLRGIPIGMLVLGNKVKAVGEVTNSEGAWVQLDKNSMVEFCESDEGEAWSLARDRGGNQYLRHEDEQVLLDQNSQPPPPSPFSVQAFNKGASCSAQGFDYGLGNNKGDQLSAILNSIQSRPNLPAPSIFDQAAKPPSSLVHSPFVFGQPLSFQQRQLQSDRGTISTSSRPVSTSGKSELPSKHSRSVKPDGHVSRTPADQKKPRGTEGLSASESLMLKSDAAKLRSDSHSRSLSPNHNTLQTLKSDGRTSSGFRAESPGPGSRSSSPKPKPLPTPRSSPSGASSPRSSSPQDKNLPQKSTAPAKTKLDPPRERSKSDSYTLDPDTLRKKKMPLTEPLRGRSTSPKPKPVPKDPKDSPGSENRAPSPHVVQENLHSEVVEVCTSSTLKTNGVTDSTCDDSGDLKSVDEGSNKVHFSIGKAPLKDEQEMRASPKISRKCANRHTRPKKEKSNFLFKGDGTKSLEPAKQAMSPSVAECARAVFASFLWHEGIVHDAMACSSFLKFNPDLSKEHAPIRSSLNSQPPTEEKEIKLKNRHSLEISSALNMFNIAPHGPDISKMGSINKNKVLSMLKEPPLHEKCEDGKSEATFEMSMHHTMKSKSPLPLTLQHLVAFWEDISLATIKAASQNMIFPSPGSCAVLKKKECEKENKKTKKEKKKKEKTEIRPRGNLFGEMAQLAVGGPEKDTICELCGESHPYPVTYHMRQAHPGCGRYAGGQGYNSIGHFCGGWAGNCGDGGMGGSTWYLVCDRCREKYLREKQAAAREKVKQSRRKPMQVKTPRALPTMEAHQVIKANALFLLSLSSAAEPSILCYHPAKPFQSQLPIVKEGVSEDLPVKMPCLYLQTLARHHHENFVGYQDDNLFQDEMRYLRSTSVPAPYISVTPDASPNVFEEPESNMKSMPPSLETSPITDTDLAKRTVFQRSYSVVASEYDKQHSILPARVKAIPRRRVNSGDTVGSSLLRHPSPELSRLISAHSSLSKGERNFQWPVLAFVIQHHDLEGLEIAMKQALRKSACRVFAMEAFNWLLCNVIQTTSLHDILWHFVAALTPSPVEAEEDEDEDNKSNKENAEQEKDTRVCEHPLSDIVIAGEAAHPLPHTFHRLLQTISDLMMSLPSGSSLQQMALRCWSLKFKQSDHQFLHQSNVFHHINNILSKSDDGDSEESFSISVQSGFEAMSQELCIVMCLKDLTSIVDIKTSSRPAMIGSLTDGSTETFWESGDEDKNKTKNITINCVKGINARYVSVHVDNSRDLGNKVTSMTFLTGKAVEELCRIKQVDLDSRHIGWVTSELPGGDNQIIKIELKGPENTLRVRQVKVLGWKDGESTKIAGQISASVAQQRSCEAETLRVFRLITSQVFGKLISGDAEPTPEQEEKALLSSPEGEEKVYNATSDADLKEHMVGIIFSRSKLTNLQKQVCAHIVQAIRMEATRVREEWEHAISSKENANSQPSDEDASSDAYCFELLSMVLALSGSNVGRQYLAQQLTLLQDLFSLLHTASPRVQRQVTSLLRRVLPEVTPNRLASIIGVKSLPPADISDIIHSTEKGDWNKLGILDMFLGCIAKALTVQLKAKGTTITGTAGTTVGKGVTTVTLPMIFNSSYLRRGESHWWMKGSTPTQISEIIIRLIKDMAAGHLSEAWSRVTKNAIAETIIALTKMEEEFRSPVRCIATTRLWLALASLCVLDQDHVDRLSSGRWMGKDGQQKQMPMCDNHDDGETAAIILCNICGNLCTDCDRFLHLHRRTKTHQRQVFKEEEEAIKVDLHEGCGRTKLFWLMALADSKTMKAMVEFREHTGKPTTSSSEACRFCGSRSGTELSAVGSVCSDADCQEYAKIACSKTHPCGHPCGGVRNEEHCLPCLHGCDKSATTLKQDADDMCMICFTEALSAAPAIQLDCSHVFHLQCCRRVLENRWLGPRITFGFISCPICKNKINHIVLKDLLDPIKELYEDVRRKALMRLEYEGLHKSEAITTPGVRFYNDAAGYAMNRYAYYVCYKCRKAYFGGEARCDAEAGQGDDYDPRELICGACSDVSRAQMCPKHGTDFLEYKCRYCCSVAVFFCFGTTHFCNACHDDFQRMTSIPKEELPHCPAGPKGKQLEGTECPLHVVHPPTGEEFALGCGVCRNAHTF.

3 disordered regions span residues 87-127 (DRDQ…RSKS), 170-192 (AASK…SREP), and 609-628 (ASKG…KPYK). The span at 100–124 (SRNKKILNKKKLKRKQKSKSKVKTR) shows a compositional bias: basic residues. Phosphoserine occurs at positions 127, 178, 181, and 183. RCC1 repeat units follow at residues 600–655 (DGSV…VISK), 699–755 (NGEV…MMCP), 907–957 (KRDK…VLME), 958–1009 (NGDV…LLMD), and 1011–1066 (QVFT…LRID). A compositionally biased stretch (basic residues) spans 899–910 (SHPAQLKHKRDK). The tract at residues 899 to 928 (SHPAQLKHKRDKHKDGSGDRGEKDASKITT) is disordered. Residues 911–924 (HKDGSGDRGEKDAS) show a composition bias toward basic and acidic residues. Residues 1235–1386 (NRFESHGGGW…GQIPQLLYRL (152 aa)) form a PHR domain 1 region. Ser1621 is modified (phosphoserine). The segment at 1723-1881 (NRFTKTSQGR…GQIPQILYYR (159 aa)) is PHR domain 2. An intrachain disulfide couples Cys1745 to Cys1860. Residues 2018–2544 (AVIESEHPYK…FNQHLGKSLL (527 aa)) are RAE1 binding. Disordered stretches follow at residues 2313 to 2336 (KKTS…SAAA) and 2780 to 3084 (QQRQ…KGDG). The Filamin repeat unit spans residues 2331-2438 (SPSAAASSAD…IDAGLEVKVK (108 aa)). A compositionally biased stretch (polar residues) spans 2780–2803 (QQRQLQSDRGTISTSSRPVSTSGK). A compositionally biased stretch (basic and acidic residues) spans 2814–2832 (VKPDGHVSRTPADQKKPRG). Ser2841 bears the Phosphoserine mark. Residues 2847–2857 (DAAKLRSDSHS) are compositionally biased toward basic and acidic residues. Residues 2858–2879 (RSLSPNHNTLQTLKSDGRTSSG) show a composition bias toward polar residues. Phosphoserine is present on residues Ser2859 and Ser2861. Composition is skewed to low complexity over residues 2884–2894 (SPGPGSRSSSP) and 2904–2917 (SSPS…SSSP). A phosphoserine mark is found at Ser2905 and Ser2911. Over residues 2918 to 2929 (QDKNLPQKSTAP) the composition is skewed to polar residues. The span at 2932–2943 (TKLDPPRERSKS) shows a compositional bias: basic and acidic residues. Ser2941, Ser2943, and Ser2992 each carry phosphoserine. Polar residues predominate over residues 3008-3021 (CTSSTLKTNGVTDS). Basic and acidic residues-rich tracts occupy residues 3027-3037 (GDLKSVDEGSN) and 3047-3056 (PLKDEQEMRA). Ser3057 is modified (phosphoserine). Residues 3060-3073 (ISRKCANRHTRPKK) are compositionally biased toward basic residues. A phosphoserine mark is found at Ser3162, Ser3550, and Ser3577. Residues 3677–3700 (VEAEEDEDEDNKSNKENAEQEKDT) are disordered. Residues 3687–3700 (NKSNKENAEQEKDT) are compositionally biased toward basic and acidic residues. Residues 3789–3967 (FSISVQSGFE…SVAQQRSCEA (179 aa)) form the DOC domain. A disordered region spans residues 3986–4007 (SGDAEPTPEQEEKALLSSPEGE). Thr3992 carries the phosphothreonine modification. A phosphoserine mark is found at Ser4002 and Ser4003. Zn(2+) is bound by residues Cys4499, Cys4502, Cys4517, His4519, His4522, Cys4525, Cys4546, Cys4549, Cys4615, and Cys4618. Residues 4499-4550 (CMICFTEALSAAPAIQLDCSHVFHLQCCRRVLENRWLGPRITFGFISCPICK) form an RING-type; atypical zinc finger. A tandem cysteine domain region spans residues 4610–4747 (YAYYVCYKCR…LGCGVCRNAH (138 aa)). Cys4629 is an active-site residue. Zn(2+) is bound by residues Cys4646, Cys4649, Cys4658, His4661, Cys4670, Cys4673, and Cys4674. Cys4681 is an active-site residue. Residues Cys4688, Cys4691, Cys4709, Cys4723, His4729, Cys4740, and Cys4743 each coordinate Zn(2+).

It belongs to the RING-Cys relay (RCR) family. As to quaternary structure, interacts with MYC. Interacts with TSC2 (tuberin) when TSC2 is in complex with TSC1 (hamartin). Interacts with FBXO45. Interacts with RAE1. Interacts with CPNE1 (via VWFA domain) and CPNE4 (via VWFA domain). Interacts with (sumoylated) RANGAP1; interaction with sumoylated RANGAP1 inhibits E3 ubiquitin-protein ligase activity and promotes MYCBP2 translocation to the nucleus. Interacts with RAN. Interacts with ATP13A2; the interaction inhibits the ubiquitination of TSC2 by MYCBP2. Interacts with USP11. Autoubiquitinated. Expression is mostly restricted to the nervous system, including expression in motor and sensory axons. During postnatal development, expression is particularly strong in the cerebellum, hippocampus and retina. Lower levels of expression are observed throughout the cerebral cortex.

Its subcellular location is the nucleus. The protein localises to the cell projection. It localises to the axon. The protein resides in the cytoplasm. It is found in the cytoskeleton. The catalysed reaction is [E2 ubiquitin-conjugating enzyme]-S-ubiquitinyl-L-cysteine + [acceptor protein]-L-threonine = [E2 ubiquitin-conjugating enzyme]-L-cysteine + [acceptor protein]-3-O-ubiquitinyl-L-threonine.. It functions in the pathway protein modification; protein ubiquitination. Atypical E3 ubiquitin-protein ligase which specifically mediates ubiquitination of threonine and serine residues on target proteins, instead of ubiquitinating lysine residues. Shows esterification activity towards both threonine and serine, with a preference for threonine, and acts via two essential catalytic cysteine residues that relay ubiquitin to its substrate via thioester intermediates. Interacts with the E2 enzymes UBE2D1, UBE2D3, UBE2E1 and UBE2L3. Plays a key role in neural development, probably by mediating ubiquitination of threonine residues on target proteins. Involved in different processes such as regulation of neurite outgrowth, synaptic growth, synaptogenesis and axon degeneration. Required for the formation of major central nervous system axon tracts. Required for proper axon growth by regulating axon navigation and axon branching: acts by regulating the subcellular location and stability of MAP3K12/DLK. Required for proper localization of retinogeniculate projections but not for eye-specific segregation. Regulates axon guidance in the olfactory system. Involved in Wallerian axon degeneration, an evolutionarily conserved process that drives the loss of damaged axons: acts by promoting destabilization of NMNAT2, probably via ubiquitination of NMNAT2. Catalyzes ubiquitination of threonine and/or serine residues on NMNAT2, consequences of threonine and/or serine ubiquitination are however unknown. Regulates the internalization of TRPV1 in peripheral sensory neurons. May mediate ubiquitination and subsequent proteasomal degradation of TSC2/tuberin. Independently of the E3 ubiquitin-protein ligase activity, also acts as a guanosine exchange factor (GEF) for RAN in neurons of dorsal root ganglia. May function as a facilitator or regulator of transcriptional activation by MYC. Acts in concert with HUWE1 to regulate the circadian clock gene expression by promoting the lithium-induced ubiquination and degradation of NR1D1. In Mus musculus (Mouse), this protein is E3 ubiquitin-protein ligase MYCBP2.